The sequence spans 455 residues: MALWGGRFQGETSALFKLFNDSLPVDYRLFEQDVIGSIAWADAIASVGVISAAECTELKAALKELLAEVGDDPQVIISTGAEDIHSFVEQKLIAKVGDLGKKLHTGRSRNDQVATDLKLWCKREGAALLARLNTLRSELIALAEREVDAVMPGYTHLQRAQPITFGHWCLAYVEMFERDLSRLTDALKRADTCPLGSGALAGTAYPIDRHALASALNFARPTLNSLDSVSDRDHVVELCSSASISMMHLSRMAEDLIFFNSGEANFISLADDVTSGSSLMPQKKNPDALELIRGKTGRVYGSLMGILTTMKALPLAYNKDMQEDKEGLFDVVDSWAICLDMAALVLSGLKVNREPALQAAQQGYANATELADYLVAKGMPFREAHHVVGEVVVFAITQQQPIEDLTLTQLQAFAKEISDDVYPNLTIAACLSKRNVLGGTAVNQVSAAIAVKKQD.

The protein belongs to the lyase 1 family. Argininosuccinate lyase subfamily.

The protein localises to the cytoplasm. The catalysed reaction is 2-(N(omega)-L-arginino)succinate = fumarate + L-arginine. The protein operates within amino-acid biosynthesis; L-arginine biosynthesis; L-arginine from L-ornithine and carbamoyl phosphate: step 3/3. The sequence is that of Argininosuccinate lyase from Shewanella denitrificans (strain OS217 / ATCC BAA-1090 / DSM 15013).